A 519-amino-acid chain; its full sequence is MKEFKIYLELDGSQQHNFLYPLLFREYIYALAHDYGLNKSTISLETVGYDNKSSSLSVKRLITRTYQRLQRIHLSIYANDSNPNHFIGHNNNLYSQILSEGFAVIVEIPFSLRLVSFLEEKAKEKEMAKSHNFQSIHSIFPFFEDNFSHLNYVLDVLIPHPIRPEILVQTFRSWVKDASSLHLLRFFLHEYFNWDSLITPKESISIFLTSNPRFFLFLYNSHGYEYESIFFFLRNQSSHLRSTSSGLLLEQIYFYGKVEDLVEVFANDFQDILWLFKDPIMHYVRYQGKCILASKDTPLLMNKWKYYLVNLWQWHFRVWFQLGRVHINHLYKDYINFLGYLSIGRLNTLVVRSQMLENAFLIDNAMKKFETTLPIIPLIGSLTKARFCNPLGHPISKLTWADSSDSHIIDRFVRICRNLSHYHSGSSKKKSLYRIKYILRVSCFKSLVRKHKSTVRVFLKRLGLEFLEEFLTEEEHVLSVIFPRALFISRRLYKGRVWYLDILCINDLVNHDKFEILSN.

It belongs to the intron maturase 2 family. MatK subfamily.

Its subcellular location is the plastid. It is found in the chloroplast. Its function is as follows. Usually encoded in the trnK tRNA gene intron. Probably assists in splicing its own and other chloroplast group II introns. This Aesculus pavia (Red buckeye) protein is Maturase K.